The following is an 856-amino-acid chain: TPR repeat-containing protein TP_0123 (856 aa).

TPR repeat units follow at residues 107 to 140 (YAAV…VADD), 523 to 556 (YRTF…AEQL), and 603 to 636 (TVSL…ALQY).

This chain is TPR repeat-containing protein TP_0123, found in Treponema pallidum (strain Nichols).